The following is an 838-amino-acid chain: Axin-2 (838 aa).

Residues 1–75 form a disordered region; it reads MSSAVLVTLL…EGRASPDSPL (75 aa). The Tankyrase-binding motif motif lies at 21-30; that stretch reads APRPPVPGEE. Positions 42-55 are enriched in polar residues; that stretch reads KVQSTKPMPVSSNA. A compositionally biased stretch (basic and acidic residues) spans 56–69; it reads RRNEDGLGEPEGRA. Residues 81–200 enclose the RGS domain; sequence SLHSLLGDQD…LTSDIYLEYV (120 aa). 5 disordered regions span residues 300 to 333, 398 to 435, 450 to 483, 568 to 682, and 712 to 744; these read SELS…KKQL, IRED…EEDP, PGCQ…LLPT, GSRG…AMPP, and VASQ…DHKE. The segment covering 303–318 has biased composition (low complexity); the sequence is SSDALTDDSMSMTDSS. The interaction with GSK3B stretch occupies residues 327–413; that stretch reads MGSKKQLQRE…KEGSEQALSS (87 aa). Positions 413–476 are interaction with beta-catenin; sequence SRDGAPVQHP…PDHHHHHHQQ (64 aa). The segment covering 727 to 737 has biased composition (polar residues); sequence AGPTSFSNPSL. Positions 756–838 constitute a DIX domain; sequence ASELIVTYFF…RILGKVERID (83 aa).

Interacts with SMAD7 and RNF111. Interacts with ANKRD6. Interacts with glycogen synthase kinase-3 beta (GSK3B) and beta-catenin. The interaction between axin and beta-catenin occurs via the armadillo repeats contained in beta-catenin. Interacts with SIAH1. Interacts with SIAH2. Post-translationally, ADP-ribosylated by tankyrase TNKS and TNKS2. Poly-ADP-ribosylated protein is recognized by RNF146, followed by ubiquitination and subsequent activation of the Wnt signaling pathway. Ubiquitinated by RNF146 when poly-ADP-ribosylated, leading to its degradation and subsequent activation of the Wnt signaling pathway. Deubiquitinated by USP34, deubiquitinated downstream of beta-catenin stabilization step: deubiquitination is important Wnt signaling to positively regulate beta-catenin (CTNBB1)-mediated transcription. In terms of processing, probably phosphorylated by GSK3B and dephosphorylated by PP2A. In terms of tissue distribution, expressed in lung and thymus.

It is found in the cytoplasm. In terms of biological role, inhibitor of the Wnt signaling pathway. Down-regulates beta-catenin. Probably facilitate the phosphorylation of beta-catenin and APC by GSK3B. The protein is Axin-2 (Axin2) of Rattus norvegicus (Rat).